A 341-amino-acid polypeptide reads, in one-letter code: Methionine import ATP-binding protein MetN (341 aa).

In terms of domain architecture, ABC transporter spans 9–247; that stretch reads ISVQDVSKKL…SENSITNELF (239 aa). Residue 41-48 participates in ATP binding; sequence GHSGSGKT.

The protein belongs to the ABC transporter superfamily. Methionine importer (TC 3.A.1.24) family. In terms of assembly, the complex is composed of two ATP-binding proteins (MetN), two transmembrane proteins (MetI) and a solute-binding protein (MetQ).

It localises to the cell inner membrane. The enzyme catalyses L-methionine(out) + ATP + H2O = L-methionine(in) + ADP + phosphate + H(+). The catalysed reaction is D-methionine(out) + ATP + H2O = D-methionine(in) + ADP + phosphate + H(+). Functionally, part of the ABC transporter complex MetNIQ involved in methionine import. Responsible for energy coupling to the transport system. This chain is Methionine import ATP-binding protein MetN, found in Chlamydia pneumoniae (Chlamydophila pneumoniae).